Here is a 461-residue protein sequence, read N- to C-terminus: pre-mRNA splicing regulator USH1G (461 aa).

ANK repeat units follow at residues 31 to 60 (DGMT…DPDK), 64 to 93 (WGNT…NIWC), and 97 to 126 (DYHT…KQSS). Disordered stretches follow at residues 208–243 (GTAR…SARS) and 332–368 (EDGG…DRSC). Residues 210-222 (ARGKTKMQKKLER) show a composition bias toward basic residues. In terms of domain architecture, SAM spans 385-447 (LEPETSPLET…KILGAVRRRR (63 aa)). The residue at position 422 (serine 422) is a Phosphoserine; by CK2.

As to quaternary structure, part of a complex composed of USH1C, USH1G and MYO7A. Interacts with USH1C (via the first PDZ domain). Interacts with PDZD7. Interacts with CDH23 and PCDH15; these interactions may recruit USH1G to the plasma membrane. Interacts with intraflagellar transport proteins IFT20, IFT52 and IFT57. Interacts with splicing factors SF3B1, PRPF6, PRPF31 and SON. Interacts with the U4/U6.U5 tri-small nuclear ribonucleoprotein (tri-snRNP) complex in the presence of pre-mRNAs. Interacts (via SAM domain) with MAGI2 (via PDZ 6 domain); the interaction is triggered by phosphorylation of USH1G by CK2 and negatively regulates MAGI2-mediated endocytosis. Expressed in vestibule of the inner ear, eye and small intestine.

The protein resides in the cytoplasm. Its subcellular location is the cytosol. It localises to the cytoskeleton. The protein localises to the cell membrane. It is found in the cell projection. The protein resides in the cilium. Its subcellular location is the nucleus speckle. It localises to the nucleus. The protein localises to the cajal body. It is found in the microtubule organizing center. The protein resides in the centrosome. Its subcellular location is the photoreceptor inner segment. In terms of biological role, plays a role in pre-mRNA splicing by regulating the release and transfer of U4/U6.U5 tri-small nuclear ribonucleoprotein (tri-snRNP) complexes from their assembly site in Cajal bodies to nuclear speckles, thereby contributing to the assembly of the pre-catalytic spliceosome on target pre-mRNAs. May also participate in recycling of snRNPs back to Cajal bodies during splicing. Plays a role in regulating MAGI2-mediated endocytosis. Anchoring/scaffolding protein that is a part of the functional network formed by USH1C, USH1G, CDH23 and MYO7A that mediates mechanotransduction in cochlear hair cells. Required for normal development and maintenance of cochlear hair cell bundles. Required for normal hearing. The polypeptide is pre-mRNA splicing regulator USH1G (USH1G) (Homo sapiens (Human)).